Reading from the N-terminus, the 380-residue chain is Transaldolase (380 aa).

K141 (schiff-base intermediate with substrate) is an active-site residue.

This sequence belongs to the transaldolase family. Type 2 subfamily.

The protein resides in the cytoplasm. It catalyses the reaction D-sedoheptulose 7-phosphate + D-glyceraldehyde 3-phosphate = D-erythrose 4-phosphate + beta-D-fructose 6-phosphate. Its pathway is carbohydrate degradation; pentose phosphate pathway; D-glyceraldehyde 3-phosphate and beta-D-fructose 6-phosphate from D-ribose 5-phosphate and D-xylulose 5-phosphate (non-oxidative stage): step 2/3. Transaldolase is important for the balance of metabolites in the pentose-phosphate pathway. This chain is Transaldolase, found in Trichodesmium erythraeum (strain IMS101).